The following is a 260-amino-acid chain: Meiotic recombination protein rec6 (260 aa).

The segment at 197–222 (QYSESSLLDDSQLLCSSPPVDSTEEA) is disordered. A compositionally biased stretch (low complexity) spans 199–213 (SESSLLDDSQLLCSS).

The protein belongs to the TOP6B-like family. Component of the DSB catalytic core (DSBC) complex, composed of at least rec12, rec6 and rec14. The complex interacts with mde2.

Functionally, required for formation of the rec12-mediated double-strand breaks (DSBs) that initiate meiotic recombination. May be involved primarily in the early steps of meiotic recombination. The sequence is that of Meiotic recombination protein rec6 from Schizosaccharomyces pombe (strain 972 / ATCC 24843) (Fission yeast).